Consider the following 690-residue polypeptide: DNA topoisomerase 1 (690 aa).

The region spanning 3–121 (DYLVIVESPA…EITKQAIKDA (119 aa)) is the Toprim domain. 2 residues coordinate Mg(2+): glutamate 9 and aspartate 82. Residues 129 to 558 (NMDLVDAQQA…DFYKGFEERL (430 aa)) form the Topo IA-type catalytic domain. The segment at 163–168 (SAGRVQ) is interaction with DNA. Catalysis depends on tyrosine 298, which acts as the O-(5'-phospho-DNA)-tyrosine intermediate. The tract at residues 329 to 354 (NGTKAVKKDKKSQDAHEAIRPTSVER) is disordered. Residues 339–354 (KSQDAHEAIRPTSVER) show a composition bias toward basic and acidic residues. C4-type zinc fingers lie at residues 579 to 605 (CEKCGHEMVYKMGRYGKFMACSNFPDC), 619 to 647 (CPKCEKGEIVERKSKKRRVFYGCNQYPEC), and 660 to 683 (CPKCSSYLVEKRTKKQVQVQCSSC).

The protein belongs to the type IA topoisomerase family. In terms of assembly, monomer. Mg(2+) serves as cofactor.

The enzyme catalyses ATP-independent breakage of single-stranded DNA, followed by passage and rejoining.. In terms of biological role, releases the supercoiling and torsional tension of DNA, which is introduced during the DNA replication and transcription, by transiently cleaving and rejoining one strand of the DNA duplex. Introduces a single-strand break via transesterification at a target site in duplex DNA. The scissile phosphodiester is attacked by the catalytic tyrosine of the enzyme, resulting in the formation of a DNA-(5'-phosphotyrosyl)-enzyme intermediate and the expulsion of a 3'-OH DNA strand. The free DNA strand then undergoes passage around the unbroken strand, thus removing DNA supercoils. Finally, in the religation step, the DNA 3'-OH attacks the covalent intermediate to expel the active-site tyrosine and restore the DNA phosphodiester backbone. The protein is DNA topoisomerase 1 of Halalkalibacterium halodurans (strain ATCC BAA-125 / DSM 18197 / FERM 7344 / JCM 9153 / C-125) (Bacillus halodurans).